Reading from the N-terminus, the 141-residue chain is Nucleoside diphosphate kinase (141 aa).

ATP-binding residues include Lys11, Phe59, Arg87, Thr93, Arg104, and Asn114. The active-site Pros-phosphohistidine intermediate is His117.

The protein belongs to the NDK family. As to quaternary structure, homotetramer. Mg(2+) serves as cofactor.

It localises to the cytoplasm. It catalyses the reaction a 2'-deoxyribonucleoside 5'-diphosphate + ATP = a 2'-deoxyribonucleoside 5'-triphosphate + ADP. The catalysed reaction is a ribonucleoside 5'-diphosphate + ATP = a ribonucleoside 5'-triphosphate + ADP. Its function is as follows. Major role in the synthesis of nucleoside triphosphates other than ATP. The ATP gamma phosphate is transferred to the NDP beta phosphate via a ping-pong mechanism, using a phosphorylated active-site intermediate. The protein is Nucleoside diphosphate kinase of Herminiimonas arsenicoxydans.